A 252-amino-acid polypeptide reads, in one-letter code: Imidazole glycerol phosphate synthase subunit HisF (252 aa).

Residues aspartate 11 and aspartate 130 contribute to the active site.

It belongs to the HisA/HisF family. Heterodimer of HisH and HisF.

It localises to the cytoplasm. It carries out the reaction 5-[(5-phospho-1-deoxy-D-ribulos-1-ylimino)methylamino]-1-(5-phospho-beta-D-ribosyl)imidazole-4-carboxamide + L-glutamine = D-erythro-1-(imidazol-4-yl)glycerol 3-phosphate + 5-amino-1-(5-phospho-beta-D-ribosyl)imidazole-4-carboxamide + L-glutamate + H(+). The protein operates within amino-acid biosynthesis; L-histidine biosynthesis; L-histidine from 5-phospho-alpha-D-ribose 1-diphosphate: step 5/9. In terms of biological role, IGPS catalyzes the conversion of PRFAR and glutamine to IGP, AICAR and glutamate. The HisF subunit catalyzes the cyclization activity that produces IGP and AICAR from PRFAR using the ammonia provided by the HisH subunit. The protein is Imidazole glycerol phosphate synthase subunit HisF of Lacticaseibacillus casei (strain BL23) (Lactobacillus casei).